Reading from the N-terminus, the 388-residue chain is MRYLTAGESHGPGLTTIIEGLPAGMPLLAEDVNKELKRRQGGHGRGARMRIEKDQVQITAGIRHGKTLGAPVAMFVENKDWKHWETVMSIEPVPEKNEKSRRVSRPRPGHADLVGGMKYGHNDMRNVLERSSARETTVRVAAGAVAKKLLHELGIEVAGHVLEIGGTRANLTRDYAVREIQETSEASPVRCLDGVAAEEMMQKIDDAKKNGDTIGGIVEVVVGGVPAGLGSYVQWDKKLDAKIARAIVSINAFKGAEFGVGFEAARKPGSEVMDEILWSKEDGYTRRTNNLGGFEGGMTNGMPIVVRGVMKPIPTLYKPLQSVDIDSKETFNASVERSDSCAVPAASVVAEAVVAWEVAVAVLEKFDGDRFDTLKKHVEEHRNLTKEF.

The NADP(+) site is built by Arg-39 and Arg-45. The disordered stretch occupies residues 95–118 (EKNEKSRRVSRPRPGHADLVGGMK). Residues 130-132 (RSS), 251-252 (NA), Gly-296, 311-315 (KPIPT), and Arg-337 each bind FMN.

The protein belongs to the chorismate synthase family. As to quaternary structure, homotetramer. Requires FMNH2 as cofactor.

The catalysed reaction is 5-O-(1-carboxyvinyl)-3-phosphoshikimate = chorismate + phosphate. The protein operates within metabolic intermediate biosynthesis; chorismate biosynthesis; chorismate from D-erythrose 4-phosphate and phosphoenolpyruvate: step 7/7. Its function is as follows. Catalyzes the anti-1,4-elimination of the C-3 phosphate and the C-6 proR hydrogen from 5-enolpyruvylshikimate-3-phosphate (EPSP) to yield chorismate, which is the branch point compound that serves as the starting substrate for the three terminal pathways of aromatic amino acid biosynthesis. This reaction introduces a second double bond into the aromatic ring system. This is Chorismate synthase from Listeria monocytogenes serotype 4b (strain CLIP80459).